Here is a 350-residue protein sequence, read N- to C-terminus: Protein RecA (350 aa).

Residue 65 to 72 participates in ATP binding; sequence GPESSGKT. A disordered region spans residues 326–350; it reads HNLKTRNTADSKVTGAKDEKSKEEK. A compositionally biased stretch (basic and acidic residues) spans 340–350; the sequence is GAKDEKSKEEK.

Belongs to the RecA family.

Its subcellular location is the cytoplasm. Its function is as follows. Can catalyze the hydrolysis of ATP in the presence of single-stranded DNA, the ATP-dependent uptake of single-stranded DNA by duplex DNA, and the ATP-dependent hybridization of homologous single-stranded DNAs. It interacts with LexA causing its activation and leading to its autocatalytic cleavage. This is Protein RecA from Clostridium novyi (strain NT).